A 95-amino-acid chain; its full sequence is LLNAEDIKKAVGACAAAESFDHKKFFQMVGLKKKNREEVKMVFQILDKDKSGFIEEEELKFILKGFSADARDLSDTETKRMMAAGDKDGDGKIGA.

S19 is modified (phosphoserine). EF-hand domains follow at residues K34–D69 and L73–A95. D47, D49, S51, F53, E55, E58, D86, D88, D90, and K92 together coordinate Ca(2+).

It belongs to the parvalbumin family.

In terms of biological role, in muscle, parvalbumin is thought to be involved in relaxation after contraction. It binds two calcium ions. The polypeptide is Parvalbumin alpha (PVALB) (Cavia porcellus (Guinea pig)).